The chain runs to 205 residues: Thymidine kinase (205 aa).

Residues 9–16 (SAMNAGKS) and 87–90 (DECQ) contribute to the ATP site. Catalysis depends on Glu88, which acts as the Proton acceptor. Zn(2+) is bound by residues Cys145, Cys147, Cys182, and His185.

It belongs to the thymidine kinase family. Homotetramer.

It localises to the cytoplasm. The enzyme catalyses thymidine + ATP = dTMP + ADP + H(+). Its activity is regulated as follows. Allosteric enzyme which is feedback inhibited by dTTP and activated by a number of dNDP and dNTP. In terms of biological role, phosphorylates both thymidine and deoxyuridine. This Escherichia coli O157:H7 protein is Thymidine kinase.